The chain runs to 286 residues: Plasma membrane ascorbate-dependent reductase CYBRD1 (286 aa).

Topologically, residues 1-7 (MAMEGYR) are cytoplasmic. The chain crosses the membrane as a helical span at residues 8-32 (GFLGLLVSALLVGFLSVIFVLIWVL). Residues 15–220 (SALLVGFLSV…FGALIFWIVT (206 aa)) enclose the Cytochrome b561 domain. The Extracellular portion of the chain corresponds to 33–47 (HFREGLGWDGGALEF). The chain crosses the membrane as a helical span at residues 48–69 (NWHPVLAVTGFVFIQGIAIIVY). The heme b site is built by histidine 50, arginine 70, and lysine 79. The Cytoplasmic segment spans residues 70–78 (RLPWTWKCS). The L-ascorbate site is built by lysine 79 and lysine 83. A helical membrane pass occupies residues 79 to 105 (KFLMKSIHAGLNAVAAILAIISVVAVF). Residue histidine 86 coordinates heme b. Over 106 to 118 (DYHNVRKIPHMYS) the chain is Extracellular. Position 108 (histidine 108) interacts with Fe(3+). Heme b contacts are provided by residues 115 to 118 (HMYS) and histidine 120. Residues 119–144 (LHSWVGLTVLILYIQQLVVGFFIFLL) form a helical membrane-spanning segment. Residues 145–151 (PWAPPSL) are Cytoplasmic-facing. An L-ascorbate-binding site is contributed by arginine 152. Residues 152–179 (RAIVMPIHVYSGLLLFGTVIATVLMGVT) traverse the membrane as a helical segment. Residues histidine 159 and glutamate 180 each coordinate heme b. Over 180–197 (EKLFFVLKNPSYHSFPPE) the chain is Extracellular. Residues 198-222 (GVFTNTLGLLILVFGALIFWIVTRP) traverse the membrane as a helical segment. At 223-286 (QWKRPREPGS…LVDTGQRSTM (64 aa)) the chain is on the cytoplasmic side. Lysine 225 serves as a coordination point for heme b. Phosphoserine is present on serine 232. Threonine 285 bears the Phosphothreonine mark.

Homodimer. Heme b is required as a cofactor. As to expression, highly expressed in all regions of the small intestine and colon studied in suckling animals. However, after weaning, when iron absorption declines significantly, strong expression is retained only in the duodenum. Also expressed in respiratory epithelium.

It localises to the cell membrane. It is found in the apical cell membrane. It carries out the reaction Fe(3+)(out) + L-ascorbate(in) = monodehydro-L-ascorbate radical(in) + Fe(2+)(out) + H(+). The catalysed reaction is Cu(2+)(out) + L-ascorbate(in) = Cu(+)(out) + monodehydro-L-ascorbate radical(in) + H(+). The enzyme catalyses monodehydro-L-ascorbate radical(out) + L-ascorbate(in) = monodehydro-L-ascorbate radical(in) + L-ascorbate(out). Functionally, plasma membrane reductase that uses cytoplasmic ascorbate as an electron donor to reduce extracellular Fe(3+) into Fe(2+). Probably functions in dietary iron absorption at the brush border of duodenal enterocytes by producing Fe(2+), the divalent form of iron that can be transported into enterocytes. It is also able to reduce extracellular monodehydro-L-ascorbate and may be involved in extracellular ascorbate regeneration by erythrocytes in blood. May also act as a ferrireductase in airway epithelial cells. May also function as a cupric transmembrane reductase. This Rattus norvegicus (Rat) protein is Plasma membrane ascorbate-dependent reductase CYBRD1.